We begin with the raw amino-acid sequence, 308 residues long: Mannan endo-1,4-beta-mannosidase (308 aa).

Catalysis depends on E125, which acts as the Proton donor. Catalysis depends on E220, which acts as the Nucleophile. A disordered region spans residues 284 to 308; it reads DGLQETSKPSTVFTDDNGGHPEPPT. Over residues 287-297 the composition is skewed to polar residues; it reads QETSKPSTVFT.

It belongs to the glycosyl hydrolase 5 (cellulase A) family.

The catalysed reaction is Random hydrolysis of (1-&gt;4)-beta-D-mannosidic linkages in mannans, galactomannans and glucomannans.. Catalyzes the endo hydrolysis of beta-1,4-linked mannan, galactomannan and glucomannan. It is able to hydrolyze mannosidic linkages that are flanked by mannose or glucose. The sequence is that of Mannan endo-1,4-beta-mannosidase from Salipaludibacillus agaradhaerens (Bacillus agaradhaerens).